Here is a 153-residue protein sequence, read N- to C-terminus: Transcription antitermination protein NusB (153 aa).

The protein belongs to the NusB family.

Its function is as follows. Involved in transcription antitermination. Required for transcription of ribosomal RNA (rRNA) genes. Binds specifically to the boxA antiterminator sequence of the ribosomal RNA (rrn) operons. In Beutenbergia cavernae (strain ATCC BAA-8 / DSM 12333 / CCUG 43141 / JCM 11478 / NBRC 16432 / NCIMB 13614 / HKI 0122), this protein is Transcription antitermination protein NusB.